Consider the following 574-residue polypeptide: Tyrosinase (574 aa).

Cu cation is bound by residues histidine 67, histidine 95, histidine 104, histidine 275, histidine 279, and histidine 304. A cross-link (2'-(S-cysteinyl)-histidine (Cys-His)) is located at residues 93–95 (CTH).

It belongs to the tyrosinase family. The cofactor is Cu(2+).

The enzyme catalyses 2 L-dopa + O2 = 2 L-dopaquinone + 2 H2O. The catalysed reaction is L-tyrosine + O2 = L-dopaquinone + H2O. Its function is as follows. This is a copper-containing oxidase that functions in the formation of pigments such as melanins and other polyphenolic compounds. In Podospora anserina (Pleurage anserina), this protein is Tyrosinase (TYR).